We begin with the raw amino-acid sequence, 617 residues long: Neopullulanase SusA (617 aa).

Positions Met-1–Ala-22 are cleaved as a signal peptide. Ca(2+)-binding residues include Asn-138, Asn-143, Asp-144, Gly-164, and Asp-166. Catalysis depends on residues Asp-331 and Glu-360.

The protein belongs to the glycosyl hydrolase 13 family. It depends on Ca(2+) as a cofactor.

It is found in the periplasm. The enzyme catalyses Hydrolysis of pullulan to panose (6-alpha-D-glucosylmaltose).. It participates in glycan degradation; starch degradation. In terms of biological role, neopullulanase that cleaves 1,4-alpha-glucosidic linkages in starch to produce disaccharides or trisaccharides in starch degradation. The polypeptide is Neopullulanase SusA (susA) (Bacteroides thetaiotaomicron (strain ATCC 29148 / DSM 2079 / JCM 5827 / CCUG 10774 / NCTC 10582 / VPI-5482 / E50)).